A 144-amino-acid chain; its full sequence is Actin-associated protein FAM107A (144 aa).

The stretch at 67 to 94 forms a coiled coil; it reads LQRVLEHRRRNQLIKKKKEELEAKRLQC. Residues 74-84 carry the Nuclear localization signal motif; the sequence is RRRNQLIKKKK. The segment at 105–124 is disordered; the sequence is QRLNQLEKPPEKEEDHAPEF. Positions 112–124 are enriched in basic and acidic residues; the sequence is KPPEKEEDHAPEF.

The protein belongs to the FAM107 family. In terms of assembly, interacts with ACTB. Interacts with COMMD1; this interaction stabilizes COMMD1 in the nucleus. Interacts with MAP1A. Interacts with PRDX1. Interacts with F-actin.

Its subcellular location is the nucleus. The protein localises to the cytoplasm. It is found in the cytoskeleton. The protein resides in the stress fiber. It localises to the cell junction. Its subcellular location is the focal adhesion. The protein localises to the cell projection. It is found in the ruffle membrane. The protein resides in the synapse. Its function is as follows. Stress-inducible actin-binding protein that plays a role in synaptic and cognitive functions by modulating actin filamentous (F-actin) dynamics. Mediates polymerization of globular actin to F-actin. Also binds to, stabilizes and bundles F-actin. Involved in synaptic function by regulating neurite outgrowth in an actin-dependent manner and for the acquisition of hippocampus-dependent cognitive function, such as learning and long-term memory. Plays a role in the actin and microtubule cytoskeleton organization; negatively regulates focal adhesion (FA) assembly promoting malignant glial cell migration in an actin-, microtubule- and MAP1A-dependent manner. Also involved in neuroblastoma G1/S phase cell cycle progression and cell proliferation inhibition by stimulating ubiquitination of NF-kappa-B subunit RELA and NF-kappa-B degradation in a COMMD1- and actin-dependent manner. May play a role in tumor development. This chain is Actin-associated protein FAM107A (FAM107A), found in Pan troglodytes (Chimpanzee).